The primary structure comprises 569 residues: Laccase-13 (569 aa).

An N-terminal signal peptide occupies residues 1–21 (MEQLRPFFLLLAIFVASLVNA). Plastocyanin-like domains follow at residues 29-145 (VIQE…PPLS) and 157-308 (REIT…YKDA). Residue Asn-75 is glycosylated (N-linked (GlcNAc...) asparagine). His-79, His-81, His-124, and His-126 together coordinate Cu cation. 6 N-linked (GlcNAc...) asparagine glycosylation sites follow: Asn-186, Asn-296, Asn-330, Asn-381, Asn-391, and Asn-432. In terms of domain architecture, Plastocyanin-like 3 spans 418 to 553 (DFPPTPPVTF…AMVFLVENGE (136 aa)). 7 residues coordinate Cu cation: His-470, His-473, His-475, His-532, Cys-533, His-534, and His-538.

The protein belongs to the multicopper oxidase family. Cu cation is required as a cofactor. In terms of tissue distribution, mostly expressed in roots. Also detected in leaves, stems and flowers but not in siliques.

The protein localises to the secreted. It is found in the extracellular space. The protein resides in the apoplast. It carries out the reaction 4 hydroquinone + O2 = 4 benzosemiquinone + 2 H2O. Its function is as follows. Lignin degradation and detoxification of lignin-derived products. This chain is Laccase-13 (LAC13), found in Arabidopsis thaliana (Mouse-ear cress).